A 471-amino-acid polypeptide reads, in one-letter code: ATP synthase subunit beta (471 aa).

Residue 153–160 (GGAGVGKT) participates in ATP binding.

This sequence belongs to the ATPase alpha/beta chains family. As to quaternary structure, F-type ATPases have 2 components, CF(1) - the catalytic core - and CF(0) - the membrane proton channel. CF(1) has five subunits: alpha(3), beta(3), gamma(1), delta(1), epsilon(1). CF(0) has three main subunits: a(1), b(2) and c(9-12). The alpha and beta chains form an alternating ring which encloses part of the gamma chain. CF(1) is attached to CF(0) by a central stalk formed by the gamma and epsilon chains, while a peripheral stalk is formed by the delta and b chains.

The protein resides in the cell membrane. The catalysed reaction is ATP + H2O + 4 H(+)(in) = ADP + phosphate + 5 H(+)(out). In terms of biological role, produces ATP from ADP in the presence of a proton gradient across the membrane. The catalytic sites are hosted primarily by the beta subunits. The polypeptide is ATP synthase subunit beta (Levilactobacillus brevis (strain ATCC 367 / BCRC 12310 / CIP 105137 / JCM 1170 / LMG 11437 / NCIMB 947 / NCTC 947) (Lactobacillus brevis)).